Reading from the N-terminus, the 172-residue chain is Photosystem I assembly protein Ycf3 (172 aa).

TPR repeat units lie at residues 35–68 (AFSY…EVDA), 72–105 (SYIL…NPSL), and 120–153 (GEQA…APTN).

It belongs to the Ycf3 family.

The protein localises to the plastid. Its subcellular location is the chloroplast thylakoid membrane. In terms of biological role, essential for the assembly of the photosystem I (PSI) complex. May act as a chaperone-like factor to guide the assembly of the PSI subunits. This Chlamydomonas reinhardtii (Chlamydomonas smithii) protein is Photosystem I assembly protein Ycf3.